Consider the following 199-residue polypeptide: Adenylyl-sulfate kinase (199 aa).

Residues 1 to 21 (MSQSSNITWHDSEVTKSDRQQ) are disordered. Basic and acidic residues predominate over residues 10–19 (HDSEVTKSDR). 34–41 (GLSGSGKS) serves as a coordination point for ATP. S108 acts as the Phosphoserine intermediate in catalysis.

The protein belongs to the APS kinase family.

The catalysed reaction is adenosine 5'-phosphosulfate + ATP = 3'-phosphoadenylyl sulfate + ADP + H(+). It functions in the pathway sulfur metabolism; hydrogen sulfide biosynthesis; sulfite from sulfate: step 2/3. Functionally, catalyzes the synthesis of activated sulfate. The chain is Adenylyl-sulfate kinase from Staphylococcus haemolyticus (strain JCSC1435).